Here is a 173-residue protein sequence, read N- to C-terminus: Ribosome maturation factor RimP (173 aa).

It belongs to the RimP family.

It localises to the cytoplasm. Its function is as follows. Required for maturation of 30S ribosomal subunits. The polypeptide is Ribosome maturation factor RimP (Pelodictyon phaeoclathratiforme (strain DSM 5477 / BU-1)).